The primary structure comprises 179 residues: Large ribosomal subunit protein uL5 (179 aa).

Belongs to the universal ribosomal protein uL5 family. Part of the 50S ribosomal subunit; part of the 5S rRNA/L5/L18/L25 subcomplex. Contacts the 5S rRNA and the P site tRNA. Forms a bridge to the 30S subunit in the 70S ribosome.

In terms of biological role, this is one of the proteins that bind and probably mediate the attachment of the 5S RNA into the large ribosomal subunit, where it forms part of the central protuberance. In the 70S ribosome it contacts protein S13 of the 30S subunit (bridge B1b), connecting the 2 subunits; this bridge is implicated in subunit movement. Contacts the P site tRNA; the 5S rRNA and some of its associated proteins might help stabilize positioning of ribosome-bound tRNAs. In Vibrio vulnificus (strain CMCP6), this protein is Large ribosomal subunit protein uL5.